We begin with the raw amino-acid sequence, 386 residues long: Cysteine protease Amb a 11.0101 (386 aa).

Positions 1-22 are cleaved as a signal peptide; that stretch reads MEINKLVCFSFSLVLILGLVES. The T-cell epitope. MHC class II peptide able to activate CD(4+) T cells of the ragweed pollen-allergic patients indicated by significantly increased IL-2 production compared to non-allergic individuals. Not recognized by IgE of the patients allergic to ragweed pollen stretch occupies residues 6–20; the sequence is LVCFSFSLVLILGLV. A propeptide spans 23 to 108 (activation peptide); it reads FHYHERELES…SKISHFQALR (86 aa). N-linked (GlcNAc...) (complex) asparagine glycosylation occurs at N127. 3 disulfide bridges follow: C152-C193, C186-C226, and C283-C334. The active site involves C155. Residues 173–186 are B-cell epitope. Binds to IgE of the patients allergic to ragweed pollen; it reads GKLVKFSEQQLVDC. Residues H289 and N310 contribute to the active site. Residues 340-377 are disordered; sequence SSFPIMNDPNPPKDDPNGPKDDPDAPKDPKFKTTQRLQ. Residues 350 to 370 are compositionally biased toward basic and acidic residues; that stretch reads PPKDDPNGPKDDPDAPKDPKF. Positions 371–386 are cleaved as a propeptide — removed in mature form; the sequence is KTTQRLQGIRTKLLEL.

The protein belongs to the peptidase C1 family. As to quaternary structure, homodimer. In terms of processing, autocatalytic proteolytic cleavage of N-terminal activation peptide. N-glycosylated. Glycosylation is not required for binding to IgE. In terms of tissue distribution, expressed in pollen (at protein and mRNA level).

With respect to regulation, activated by L-cysteine. Inhibited by cysteine protease inhibitor E64 (L-trans-epoxysuccinyl-leucylamide-(4-guanido)-butane). Inhibited by cysteine/serine protease inhibitor leupeptin. Not inhibited by serine protease inhibitors 4-(2-aminoethyl)benzenesulfonyl fluoride hydrochloride (AEBSF) and phenylmethanesulfonyl fluoride (PMSF), metallo protease inhibitor bestatin or aspartic protease inhibitor pepstatin A. In terms of biological role, cysteine protease. Hydrolyzes casein and synthetic peptide Boc-Val-Leu-Lys-7-amino-4-methylcoumarin (Boc-VLK-AMC) in vitro. The sequence is that of Cysteine protease Amb a 11.0101 from Ambrosia artemisiifolia (Common ragweed).